A 401-amino-acid chain; its full sequence is MKKVVLAYSGGLDTSIIIPWLKENYGYEVIAMAADLGQGEELEPLHEKAIKSGASKLYIEDLQEEFVTDFIYPTLKAGAVYEGKYLLGTSFARPLIAQRLVEIAAKEGAVAIAHGATGKGNDQVRFELAVKALNPDLEIIAPWRIWDIKSREDAIDYAVERGIPVPVTKDRPYSMDRNVWHLSHEGGDLEDPWNEPKKDLYLLGVSPEDAPDEAEYLELDFEQGIPVSLNGEKLGPVQLLETLNEVGGKHGIGIVDMVENRLVGMKSRGVYETPGGTILYTAHQALEHLTLDRLTLHYKEQIALKYAELVYDGVWHSPLREALDAFVDVTQKNVTGTVRLKLYKGNCSLAGVKSPYSLYSEEFATFGRDGVYNQKDAEGFINLFGLPLKVRALMEKKSGLR.

ATP contacts are provided by residues 7–15 (AYSGGLDTS) and alanine 34. L-citrulline is bound by residues tyrosine 85 and serine 90. Glycine 115 is a binding site for ATP. Residues threonine 117, asparagine 121, and aspartate 122 each contribute to the L-aspartate site. Residue asparagine 121 coordinates L-citrulline. Residues arginine 125, serine 174, serine 183, glutamate 259, and tyrosine 271 each contribute to the L-citrulline site.

Belongs to the argininosuccinate synthase family. Type 1 subfamily. In terms of assembly, homotetramer.

The protein resides in the cytoplasm. It carries out the reaction L-citrulline + L-aspartate + ATP = 2-(N(omega)-L-arginino)succinate + AMP + diphosphate + H(+). It participates in amino-acid biosynthesis; L-arginine biosynthesis; L-arginine from L-ornithine and carbamoyl phosphate: step 2/3. This is Argininosuccinate synthase from Desulfitobacterium hafniense (strain DSM 10664 / DCB-2).